The following is a 78-amino-acid chain: Large ribosomal subunit protein bL28 (78 aa).

It belongs to the bacterial ribosomal protein bL28 family.

This chain is Large ribosomal subunit protein bL28, found in Prochlorococcus marinus (strain MIT 9303).